Consider the following 189-residue polypeptide: MIDQFERLPGIGPRTAQRLALHLLRQPEEQIHSFADALLAARSQVGQCQTCFHLSAEPTCEICRNPERSIGMLCVVADSRDLLALERTREYAGRYHVLGGLISPMDGIGPEMLQISNLVKRVAADEINEVILALTPSVEGDTTSLYLARLLKPFTEVSRIAYGLPVGSELEYADDVTLSRALEGRRAVE.

A C4-type zinc finger spans residues 48 to 63; that stretch reads CQTCFHLSAEPTCEIC. Residues 71 to 165 enclose the Toprim domain; sequence GMLCVVADSR…EVSRIAYGLP (95 aa).

The protein belongs to the RecR family.

Its function is as follows. May play a role in DNA repair. It seems to be involved in an RecBC-independent recombinational process of DNA repair. It may act with RecF and RecO. This is Recombination protein RecR from Synechococcus sp. (strain CC9311).